An 89-amino-acid chain; its full sequence is Putative regulatory protein CPE1749 (89 aa).

It belongs to the RemA family.

The protein is Putative regulatory protein CPE1749 of Clostridium perfringens (strain 13 / Type A).